The primary structure comprises 343 residues: Diterpene cyclase DtcycB (343 aa).

Asn-219, Ser-223, and Glu-227 together coordinate Mg(2+).

The protein belongs to the terpene synthase family. In terms of assembly, homodimer. It depends on Mg(2+) as a cofactor.

It catalyses the reaction (2E,6E,10E)-geranylgeranyl diphosphate + H2O = (R)-nephthenol + diphosphate. The catalysed reaction is (2E,6E,10E)-geranylgeranyl diphosphate = (R)-cembrene A + diphosphate. The enzyme catalyses (2E,6E,10E)-geranylgeranyl diphosphate + H2O = (1S,4E,8E,12E)-2,2,5,9,13-pentamethylcyclopentadeca-4,8,12-trien-1-ol + diphosphate. Functionally, diterpene cyclases that can form multiple diterpene products. The polypeptide is Diterpene cyclase DtcycB (Streptomyces sp).